The sequence spans 160 residues: Large ribosomal subunit protein eL21 (160 aa).

Basic and acidic residues-rich tracts occupy residues 112-123 (NDQKKKEAKEKG) and 136-145 (REAHFVRTNG). The interval 112–145 (NDQKKKEAKEKGTWVQLKRQPAPPREAHFVRTNG) is disordered.

Belongs to the eukaryotic ribosomal protein eL21 family. As to quaternary structure, component of the large ribosomal subunit.

Its subcellular location is the cytoplasm. It is found in the cytosol. The protein resides in the endoplasmic reticulum. Its function is as follows. Component of the large ribosomal subunit. The ribosome is a large ribonucleoprotein complex responsible for the synthesis of proteins in the cell. The chain is Large ribosomal subunit protein eL21 (RPL21) from Oryctolagus cuniculus (Rabbit).